The chain runs to 426 residues: Tryptophan synthase beta chain (426 aa).

Lys-108 is modified (N6-(pyridoxal phosphate)lysine).

Belongs to the TrpB family. As to quaternary structure, tetramer of two alpha and two beta chains. Pyridoxal 5'-phosphate is required as a cofactor.

The enzyme catalyses (1S,2R)-1-C-(indol-3-yl)glycerol 3-phosphate + L-serine = D-glyceraldehyde 3-phosphate + L-tryptophan + H2O. It participates in amino-acid biosynthesis; L-tryptophan biosynthesis; L-tryptophan from chorismate: step 5/5. In terms of biological role, the beta subunit is responsible for the synthesis of L-tryptophan from indole and L-serine. The protein is Tryptophan synthase beta chain (trpB) of Thermoplasma volcanium (strain ATCC 51530 / DSM 4299 / JCM 9571 / NBRC 15438 / GSS1).